Consider the following 179-residue polypeptide: O-acetyl-ADP-ribose deacetylase (179 aa).

In terms of domain architecture, Macro spans 1–175; sequence MTSRLQVIQG…LYARLLTQQG (175 aa). Substrate-binding positions include 11–12, Asn-25, 33–35, and 122–126; these read DI, GVD, and STGVY. The active-site Proton acceptor is Asp-35.

It belongs to the MacroD-type family. YmdB subfamily. As to quaternary structure, homodimer. Interacts with RNase III.

It carries out the reaction 3''-O-acetyl-ADP-D-ribose + H2O = ADP-D-ribose + acetate + H(+). It catalyses the reaction 2''-O-acetyl-ADP-D-ribose + H2O = ADP-D-ribose + acetate + H(+). Deacetylates O-acetyl-ADP ribose to yield ADP-ribose and free acetate. Down-regulates ribonuclease 3 (RNase III) activity. Acts by interacting directly with the region of the ribonuclease that is required for dimerization/activation. This chain is O-acetyl-ADP-ribose deacetylase, found in Salmonella gallinarum (strain 287/91 / NCTC 13346).